The chain runs to 552 residues: CTP synthase (552 aa).

The segment at 1–270 (MTKYVFVTGG…DRIICEELKL (270 aa)) is amidoligase domain. Ser13 contacts CTP. Ser13 is a UTP binding site. ATP contacts are provided by residues 14–19 (SLGKGI) and Asp71. Residues Asp71 and Glu144 each coordinate Mg(2+). Residues 151 to 153 (DIE), 191 to 196 (KTKPTQ), and Lys227 each bind CTP. UTP is bound by residues 191 to 196 (KTKPTQ) and Lys227. The 253-residue stretch at 295-547 (TIGMVGKYVD…VEAALANKQA (253 aa)) folds into the Glutamine amidotransferase type-1 domain. An L-glutamine-binding site is contributed by Gly356. Catalysis depends on Cys383, which acts as the Nucleophile; for glutamine hydrolysis. L-glutamine-binding positions include 384-387 (LGMQ), Glu407, and Arg473. Active-site residues include His520 and Glu522.

This sequence belongs to the CTP synthase family. Homotetramer.

It catalyses the reaction UTP + L-glutamine + ATP + H2O = CTP + L-glutamate + ADP + phosphate + 2 H(+). The enzyme catalyses L-glutamine + H2O = L-glutamate + NH4(+). The catalysed reaction is UTP + NH4(+) + ATP = CTP + ADP + phosphate + 2 H(+). It participates in pyrimidine metabolism; CTP biosynthesis via de novo pathway; CTP from UDP: step 2/2. Allosterically activated by GTP, when glutamine is the substrate; GTP has no effect on the reaction when ammonia is the substrate. The allosteric effector GTP functions by stabilizing the protein conformation that binds the tetrahedral intermediate(s) formed during glutamine hydrolysis. Inhibited by the product CTP, via allosteric rather than competitive inhibition. In terms of biological role, catalyzes the ATP-dependent amination of UTP to CTP with either L-glutamine or ammonia as the source of nitrogen. Regulates intracellular CTP levels through interactions with the four ribonucleotide triphosphates. The chain is CTP synthase from Burkholderia ambifaria (strain MC40-6).